A 168-amino-acid chain; its full sequence is Signal peptidase I V (168 aa).

At 1 to 6 (MKKRFW) the chain is on the cytoplasmic side. A helical transmembrane segment spans residues 7-26 (FLAGVVSVVLAIQVKNAVFI). Residues 27–168 (DYKVEGVSMN…NIVGVISDAE (142 aa)) are Extracellular-facing. Residues serine 34 and lysine 75 contribute to the active site.

Belongs to the peptidase S26 family.

It localises to the cell membrane. It catalyses the reaction Cleavage of hydrophobic, N-terminal signal or leader sequences from secreted and periplasmic proteins.. This Bacillus subtilis (strain 168) protein is Signal peptidase I V (sipV).